A 461-amino-acid chain; its full sequence is Bifunctional protein GlmU (461 aa).

Positions M1 to R236 are pyrophosphorylase. Residues K27, Q80, G85–T86, Y109–D111, G146, E160, N175, and N234 each bind UDP-N-acetyl-alpha-D-glucosamine. Residue D111 coordinates Mg(2+). N234 contributes to the Mg(2+) binding site. The interval F237–N257 is linker. Residues G258–K461 are N-acetyltransferase. K358 is a UDP-N-acetyl-alpha-D-glucosamine binding site. Catalysis depends on H370, which acts as the Proton acceptor. The UDP-N-acetyl-alpha-D-glucosamine site is built by Y373 and N384. Acetyl-CoA-binding residues include A387, A430, and R447.

In the N-terminal section; belongs to the N-acetylglucosamine-1-phosphate uridyltransferase family. It in the C-terminal section; belongs to the transferase hexapeptide repeat family. Homotrimer. Mg(2+) is required as a cofactor.

The protein resides in the cytoplasm. The enzyme catalyses alpha-D-glucosamine 1-phosphate + acetyl-CoA = N-acetyl-alpha-D-glucosamine 1-phosphate + CoA + H(+). It carries out the reaction N-acetyl-alpha-D-glucosamine 1-phosphate + UTP + H(+) = UDP-N-acetyl-alpha-D-glucosamine + diphosphate. The protein operates within nucleotide-sugar biosynthesis; UDP-N-acetyl-alpha-D-glucosamine biosynthesis; N-acetyl-alpha-D-glucosamine 1-phosphate from alpha-D-glucosamine 6-phosphate (route II): step 2/2. It participates in nucleotide-sugar biosynthesis; UDP-N-acetyl-alpha-D-glucosamine biosynthesis; UDP-N-acetyl-alpha-D-glucosamine from N-acetyl-alpha-D-glucosamine 1-phosphate: step 1/1. It functions in the pathway bacterial outer membrane biogenesis; LPS lipid A biosynthesis. Catalyzes the last two sequential reactions in the de novo biosynthetic pathway for UDP-N-acetylglucosamine (UDP-GlcNAc). The C-terminal domain catalyzes the transfer of acetyl group from acetyl coenzyme A to glucosamine-1-phosphate (GlcN-1-P) to produce N-acetylglucosamine-1-phosphate (GlcNAc-1-P), which is converted into UDP-GlcNAc by the transfer of uridine 5-monophosphate (from uridine 5-triphosphate), a reaction catalyzed by the N-terminal domain. This is Bifunctional protein GlmU from Wigglesworthia glossinidia brevipalpis.